Reading from the N-terminus, the 311-residue chain is Probable deoxyhypusine synthase (311 aa).

Lys284 serves as the catalytic Nucleophile.

This sequence belongs to the deoxyhypusine synthase family. Requires NAD(+) as cofactor.

It catalyses the reaction [eIF5A protein]-L-lysine + spermidine = [eIF5A protein]-deoxyhypusine + propane-1,3-diamine. Its pathway is protein modification; eIF5A hypusination. Functionally, catalyzes the NAD-dependent oxidative cleavage of spermidine and the subsequent transfer of the butylamine moiety of spermidine to the epsilon-amino group of a specific lysine residue of the eIF-5A precursor protein to form the intermediate deoxyhypusine residue. In Sulfurisphaera tokodaii (strain DSM 16993 / JCM 10545 / NBRC 100140 / 7) (Sulfolobus tokodaii), this protein is Probable deoxyhypusine synthase (dys).